The primary structure comprises 660 residues: E3 ubiquitin-protein ligase ORTHRUS 3 (660 aa).

Residues 12–63 (EGVCMRCKSMPPPEESLTCGTCVTPWHVSCLLSPPETLSATLQWLCPDCSGE) form a PHD-type zinc finger. Residues 107 to 129 (QLLSGKGVVDEDDEEEKKKTSKG) are disordered. The RING-type 1 zinc-finger motif lies at 141 to 197 (CSFCMQSLQKPVSVRVLFALALMLVWFLESTPCGHNACLKCFLKWMGQGHRSCGTCR). Positions 285-434 (VRNQGLLVGE…CRFLFVRCDN (150 aa)) constitute a YDG domain. An RING-type 2 zinc finger spans residues 528 to 585 (CQICQKVMTNPVTTPCAHNFCKACLESKFAGTALVRERGSGGRKLRSQKSVMKCPCCP). Residues 593-622 (QNPQVNREVAEVIEKLKKQEEEENAKSLDE) adopt a coiled-coil conformation. Basic and acidic residues-rich tracts occupy residues 610–621 (KQEEEENAKSLD) and 637–646 (QPKKRIKLDT). A disordered region spans residues 610 to 660 (KQEEEENAKSLDEGQCSGTSHEEEDDEQPKKRIKLDTDAEVSATVVESDMK).

It is found in the nucleus. The enzyme catalyses S-ubiquitinyl-[E2 ubiquitin-conjugating enzyme]-L-cysteine + [acceptor protein]-L-lysine = [E2 ubiquitin-conjugating enzyme]-L-cysteine + N(6)-ubiquitinyl-[acceptor protein]-L-lysine.. It functions in the pathway protein modification; protein ubiquitination. Functionally, E3 ubiquitin-protein ligase. May participate in CpG methylation-dependent transcriptional regulation. In Arabidopsis thaliana (Mouse-ear cress), this protein is E3 ubiquitin-protein ligase ORTHRUS 3 (ORTH3).